Consider the following 191-residue polypeptide: Molybdenum cofactor guanylyltransferase (191 aa).

Residues 13 to 15 (LAG), K26, D72, and D102 contribute to the GTP site. D102 lines the Mg(2+) pocket.

This sequence belongs to the MobA family. As to quaternary structure, monomer. The cofactor is Mg(2+).

It localises to the cytoplasm. The enzyme catalyses Mo-molybdopterin + GTP + H(+) = Mo-molybdopterin guanine dinucleotide + diphosphate. Functionally, transfers a GMP moiety from GTP to Mo-molybdopterin (Mo-MPT) cofactor (Moco or molybdenum cofactor) to form Mo-molybdopterin guanine dinucleotide (Mo-MGD) cofactor. This chain is Molybdenum cofactor guanylyltransferase, found in Pseudomonas putida (strain GB-1).